The sequence spans 436 residues: Methylenetetrahydrofolate--tRNA-(uracil-5-)-methyltransferase TrmFO (436 aa).

Residue 10–15 coordinates FAD; the sequence is GAGLAG.

The protein belongs to the MnmG family. TrmFO subfamily. FAD serves as cofactor.

The protein localises to the cytoplasm. The enzyme catalyses uridine(54) in tRNA + (6R)-5,10-methylene-5,6,7,8-tetrahydrofolate + NADH + H(+) = 5-methyluridine(54) in tRNA + (6S)-5,6,7,8-tetrahydrofolate + NAD(+). It carries out the reaction uridine(54) in tRNA + (6R)-5,10-methylene-5,6,7,8-tetrahydrofolate + NADPH + H(+) = 5-methyluridine(54) in tRNA + (6S)-5,6,7,8-tetrahydrofolate + NADP(+). Functionally, catalyzes the folate-dependent formation of 5-methyl-uridine at position 54 (M-5-U54) in all tRNAs. In Exiguobacterium sp. (strain ATCC BAA-1283 / AT1b), this protein is Methylenetetrahydrofolate--tRNA-(uracil-5-)-methyltransferase TrmFO.